The primary structure comprises 711 residues: Dendrin (711 aa).

4 disordered regions span residues 1-22 (MLDG…DEES), 49-273 (APSR…KKRL), 324-446 (DLNS…SQGL), and 479-677 (PSGV…AELS). Pro residues predominate over residues 75-84 (PGSPQPPPRR). Residues 102-134 (LAEVRAREQEKRKAASQEREAKETERKRRKAGG) adopt a coiled-coil conformation. Residues 105–127 (VRAREQEKRKAASQEREAKETER) show a composition bias toward basic and acidic residues. The tract at residues 113–131 (RKAASQEREAKETERKRRK) is nuclear localization. Positions 150–161 (APRVAQLAGLPA) are enriched in low complexity. Residues 186-236 (GSAWAGPWGGRRPGPPSYEAHLLLRGSAGTAPRRRWDRPPPYVAPPSYEGP) form an interaction with MAGI2 region. 2 stretches are compositionally biased toward low complexity: residues 252–262 (PTSSAPAATPA) and 346–356 (APAGSATAAPC). The segment at 341–436 (AGTEIAPAGS…LEGWKATRRA (96 aa)) is interaction with ACTN1. Ser-389 is modified (phosphoserine). The interval 408–709 (GGTGWRESLG…IRGTQQGNRK (302 aa)) is interaction with CD2AP and NPHS1. Residues 529–546 (GEAEGGRPGDSTLEERTF) are compositionally biased toward basic and acidic residues.

In terms of assembly, forms a ternary complex with MAGI2 and SH3KBP1; recruits DDN to the cytoplasm. Interacts with MAGI1. Interacts with ACTN1 and may interact with WWC1. Interacts with the podocyte slit diaphragm proteins CD2AP, NPHS1 and NPHS2; the interaction with CD2AP and NPHS1 is direct. Specifically expressed in brain and kidney. Expressed in kidney glomerular capillary loops (at protein level).

It localises to the cell projection. Its subcellular location is the dendritic spine membrane. The protein resides in the cytoplasm. It is found in the endoplasmic reticulum membrane. The protein localises to the perikaryon. It localises to the nucleus. Its function is as follows. Promotes apoptosis of kidney glomerular podocytes. Podocytes are highly specialized cells essential to the ultrafiltration of blood, resulting in the extraction of urine and the retention of protein. The polypeptide is Dendrin (DDN) (Homo sapiens (Human)).